Here is a 357-residue protein sequence, read N- to C-terminus: DNA replication and repair protein RecF (357 aa).

31 to 38 (GQNGAGKT) contributes to the ATP binding site.

Belongs to the RecF family.

Its subcellular location is the cytoplasm. In terms of biological role, the RecF protein is involved in DNA metabolism; it is required for DNA replication and normal SOS inducibility. RecF binds preferentially to single-stranded, linear DNA. It also seems to bind ATP. The polypeptide is DNA replication and repair protein RecF (Coxiella burnetii (strain RSA 493 / Nine Mile phase I)).